A 614-amino-acid chain; its full sequence is Zinc finger and SCAN domain-containing protein 2 (614 aa).

Disordered stretches follow at residues 1-25 (MAAE…EDEQ), 42-73 (AVLQ…EGPQ), and 162-200 (NISG…RVVP). One can recognise an SCAN box domain in the interval 69-127 (AEGPQGALVRFRELCRRWLRPEVHTKEQMLTVLPREIQAWLQEHRPESSEEAVALVEDL). 14 C2H2-type zinc fingers span residues 222–244 (YECP…ERTH), 250–272 (YKCD…QTTH), 278–300 (YKCR…QRIH), 306–328 (FQCA…QRTH), 334–356 (YSCP…QGIH), 362–384 (YACK…QRIH), 390–412 (YKCT…RRTH), 418–440 (YQCG…RRTH), 446–468 (YKCG…QGTH), 474–496 (YECL…QRTH), 502–524 (YRCG…QRTH), 530–552 (YKCL…QRAH), 558–580 (YRCP…QRIH), and 586–608 (YRCP…QRTH).

The protein belongs to the krueppel C2H2-type zinc-finger protein family. As to expression, in the adult, predominantly found in spermatids. Also present in the embryo.

The protein localises to the nucleus. In terms of biological role, may be involved in transcriptional regulation during the post-meiotic stages of spermatogenesis. This Mus musculus (Mouse) protein is Zinc finger and SCAN domain-containing protein 2 (Zscan2).